We begin with the raw amino-acid sequence, 138 residues long: Flavodoxin (138 aa).

One can recognise a Flavodoxin-like domain in the interval 1–136 (MKIVYWSGTG…DCIEFGKKIA (136 aa)).

It belongs to the flavodoxin family. FMN serves as cofactor.

Low-potential electron donor to a number of redox enzymes. In Clostridium beijerinckii (Clostridium MP), this protein is Flavodoxin.